A 248-amino-acid polypeptide reads, in one-letter code: 1-(5-phosphoribosyl)-5-[(5-phosphoribosylamino)methylideneamino] imidazole-4-carboxamide isomerase (248 aa).

The Proton acceptor role is filled by D8. Residue D129 is the Proton donor of the active site.

Belongs to the HisA/HisF family.

It localises to the cytoplasm. The enzyme catalyses 1-(5-phospho-beta-D-ribosyl)-5-[(5-phospho-beta-D-ribosylamino)methylideneamino]imidazole-4-carboxamide = 5-[(5-phospho-1-deoxy-D-ribulos-1-ylimino)methylamino]-1-(5-phospho-beta-D-ribosyl)imidazole-4-carboxamide. It functions in the pathway amino-acid biosynthesis; L-histidine biosynthesis; L-histidine from 5-phospho-alpha-D-ribose 1-diphosphate: step 4/9. This chain is 1-(5-phosphoribosyl)-5-[(5-phosphoribosylamino)methylideneamino] imidazole-4-carboxamide isomerase, found in Desulfitobacterium hafniense (strain Y51).